Consider the following 273-residue polypeptide: Phosphate import ATP-binding protein PstB (273 aa).

Residues 17-259 (LSAENLSIFY…DKTNNIFQNP (243 aa)) enclose the ABC transporter domain. 49–56 (GPSGCGKS) is an ATP binding site.

The protein belongs to the ABC transporter superfamily. Phosphate importer (TC 3.A.1.7) family. The complex is composed of two ATP-binding proteins (PstB), two transmembrane proteins (PstC and PstA) and a solute-binding protein (PstS).

It is found in the cell inner membrane. The catalysed reaction is phosphate(out) + ATP + H2O = ADP + 2 phosphate(in) + H(+). Its function is as follows. Part of the ABC transporter complex PstSACB involved in phosphate import. Responsible for energy coupling to the transport system. This is Phosphate import ATP-binding protein PstB from Trichodesmium erythraeum (strain IMS101).